The following is a 179-amino-acid chain: O-acetyl-ADP-ribose deacetylase (179 aa).

The Macro domain occupies 1–175 (MTSRLQVIQG…LYARLLTQQG (175 aa)). Substrate is bound by residues 11 to 12 (DI), asparagine 25, 33 to 35 (GVD), and 122 to 126 (STGVY). The active-site Proton acceptor is the aspartate 35.

It belongs to the MacroD-type family. YmdB subfamily. In terms of assembly, homodimer. Interacts with RNase III.

The catalysed reaction is 3''-O-acetyl-ADP-D-ribose + H2O = ADP-D-ribose + acetate + H(+). The enzyme catalyses 2''-O-acetyl-ADP-D-ribose + H2O = ADP-D-ribose + acetate + H(+). In terms of biological role, deacetylates O-acetyl-ADP ribose to yield ADP-ribose and free acetate. Down-regulates ribonuclease 3 (RNase III) activity. Acts by interacting directly with the region of the ribonuclease that is required for dimerization/activation. The sequence is that of O-acetyl-ADP-ribose deacetylase from Salmonella newport (strain SL254).